A 125-amino-acid chain; its full sequence is Interferon-induced transmembrane protein 1 (125 aa).

Residues 1–36 are Cytoplasmic-facing; it reads MHKEEHEVAVLGPPPSTILPRSTVINIHSETSVPDH. Residue S16 is modified to Phosphoserine. The segment at residues 37-57 is an intramembrane region (helical); the sequence is VVWSLFNTLFLNWCCLGFIAF. S-palmitoyl cysteine attachment occurs at residues C50, C51, and C84. At 58–86 the chain is on the cytoplasmic side; sequence AYSVKSRDRKMVGDVTGAQAYASTAKCLN. The tract at residues 84-125 is interaction with CAV1; that stretch reads CLNIWALILGILMTIGFILLLVFGSVTVYHIMLQIIQEKRGY. Residues 87–107 traverse the membrane as a helical segment; that stretch reads IWALILGILMTIGFILLLVFG. Residues 108–125 lie on the Extracellular side of the membrane; it reads SVTVYHIMLQIIQEKRGY.

Belongs to the CD225/Dispanin family. As to quaternary structure, interacts with CD81. Part of a complex composed of CD19, CR2/CD21, CD81 and IFITM1/CD225 in the membrane of mature B-cells. Interacts with CAV1; this interaction enhances the ability of CAV1 in inhibiting ERK activation. Palmitoylation on membrane-proximal cysteines controls clustering in membrane compartments and antiviral activity. Bone (at protein level). Levels greatly elevated in colon cancer, cervical cancer, esophageal cancer and ovarian cancer. Expressed in glioma cell lines.

It is found in the cell membrane. It localises to the lysosome membrane. Functionally, IFN-induced antiviral protein which inhibits the entry of viruses to the host cell cytoplasm, permitting endocytosis, but preventing subsequent viral fusion and release of viral contents into the cytosol. Active against multiple viruses, including influenza A virus, SARS coronaviruses (SARS-CoV and SARS-CoV-2), Marburg virus (MARV), Ebola virus (EBOV), Dengue virus (DNV), West Nile virus (WNV), human immunodeficiency virus type 1 (HIV-1) and hepatitis C virus (HCV). Can inhibit: influenza virus hemagglutinin protein-mediated viral entry, MARV and EBOV GP1,2-mediated viral entry and SARS-CoV and SARS-CoV-2 S protein-mediated viral entry. Also implicated in cell adhesion and control of cell growth and migration. Inhibits SARS-CoV-2 S protein-mediated syncytia formation. Plays a key role in the antiproliferative action of IFN-gamma either by inhibiting the ERK activation or by arresting cell growth in G1 phase in a p53-dependent manner. Acts as a positive regulator of osteoblast differentiation. In hepatocytes, IFITM proteins act in a coordinated manner to restrict HCV infection by targeting the endocytosed HCV virion for lysosomal degradation. IFITM2 and IFITM3 display anti-HCV activity that may complement the anti-HCV activity of IFITM1 by inhibiting the late stages of HCV entry, possibly in a coordinated manner by trapping the virion in the endosomal pathway and targeting it for degradation at the lysosome. This is Interferon-induced transmembrane protein 1 from Homo sapiens (Human).